The chain runs to 808 residues: Beta-catenin/armadillo-related protein 1 (808 aa).

An involved in transcriptional activation region spans residues 1 to 85; the sequence is MDLDPNLVIN…SSHLSGMSSM (85 aa). ARM repeat units lie at residues 118–160, 165–209, and 369–408; these read RAIP…NETK, CVIF…RAIS, and SDVPSKMKEELLLKSLLELVNSRNAVIRLYSAQTMSNLVA. An involved in transcriptional activation region spans residues 541-808; that stretch reads NVQDVIEGVR…DQYPYRQGRF (268 aa). Positions 702-808 are disordered; that stretch reads TYEGAGEQWS…DQYPYRQGRF (107 aa). Positions 723–736 are enriched in polar residues; the sequence is YCNSSGRDSSKTYN. A compositionally biased stretch (low complexity) spans 737 to 750; the sequence is SPMYHSPPSMYPEY. The segment covering 786-798 has biased composition (polar residues); the sequence is NIPSNQGPSSHLS.

Belongs to the beta-catenin family. Interacts with apr-1, axl-1, daf-16, lin-23, and pop-1 (via acidic region in N-terminus 1-44). Interacts (via ARM repeats) with pry-1.

The protein localises to the cytoplasm. It localises to the nucleus. It is found in the membrane. Its subcellular location is the cell junction. Functionally, participates in the Wnt signaling pathway which affects cell fate and may regulate the stem cell divisions of seam cells during larval development. Functions as a transcriptional activator but is dependent on the interaction with pop-1. Involved in maintaining lin-39 Hox expression and regulating glr-1 abundance at the synapses. Required for mab-5 expression during Q neuroblast migration and for oxidative stress-induced daf-16 signaling. Has roles in egg laying, vulva precursor cell fate determination, Q neuroblast migration, posterior ectodermal cell P12 specification, movement, body length, male tail development and dauer induction. Functionally redundant to wrm-1 and hmp-2. This Caenorhabditis briggsae protein is Beta-catenin/armadillo-related protein 1 (bar-1).